Here is a 235-residue protein sequence, read N- to C-terminus: tRNA1(Val) (adenine(37)-N6)-methyltransferase (235 aa).

Belongs to the methyltransferase superfamily. tRNA (adenine-N(6)-)-methyltransferase family.

The protein resides in the cytoplasm. The enzyme catalyses adenosine(37) in tRNA1(Val) + S-adenosyl-L-methionine = N(6)-methyladenosine(37) in tRNA1(Val) + S-adenosyl-L-homocysteine + H(+). Its function is as follows. Specifically methylates the adenine in position 37 of tRNA(1)(Val) (anticodon cmo5UAC). In Glaesserella parasuis serovar 5 (strain SH0165) (Haemophilus parasuis), this protein is tRNA1(Val) (adenine(37)-N6)-methyltransferase.